Reading from the N-terminus, the 1296-residue chain is ABC transporter B family member 21 (1296 aa).

Residues 1-59 (MDSVIESEEGLKVDSPNRADAETSNSKIHEEDEKELKTESDLKEEKKKTEKNKQEEDEK) form a disordered region. Positions 9–59 (EGLKVDSPNRADAETSNSKIHEEDEKELKTESDLKEEKKKTEKNKQEEDEK) are enriched in basic and acidic residues. A helical membrane pass occupies residues 77–97 (IILMILGTIGAVGNGLGFPIM). An ABC transmembrane type-1 1 domain is found at 80 to 368 (MILGTIGAVG…ASPCLSAFAA (289 aa)). Asn113 is a glycosylation site (N-linked (GlcNAc...) asparagine). The next 5 helical transmembrane spans lie at 128–148 (FVYL…GWMI), 205–225 (IQLV…GWLL), 227–247 (LVMV…AIVI), 307–327 (GLGL…AVWY), and 336–356 (GYTG…SMSL). Residues 403-639 (IELNNVNFSY…PEGAYSQLIR (237 aa)) enclose the ABC transporter 1 domain. An N-linked (GlcNAc...) asparagine glycan is attached at Asn409. 438 to 445 (GQSGSGKS) is a binding site for ATP. Asn505, Asn519, and Asn590 each carry an N-linked (GlcNAc...) asparagine glycan. Positions 640–662 (LQEDTKQTEDSTDEQKLSMESMK) are enriched in basic and acidic residues. Residues 640-672 (LQEDTKQTEDSTDEQKLSMESMKRSSLRKSSLS) form a disordered region. Ser657 and Ser660 each carry phosphoserine. In terms of domain architecture, ABC transmembrane type-1 2 spans 730–1017 (LILGSIAAVL…SSSLSPDSSK (288 aa)). 2 consecutive transmembrane segments (helical) span residues 731-751 (ILGS…GILI) and 774-794 (IIFM…TIFF). N-linked (GlcNAc...) asparagine glycosylation is present at Asn826. The next 3 helical transmembrane spans lie at 865-885 (VIAF…LPLI), 952-972 (GIVS…SYAA), and 986-1006 (TTFD…VAIS). The 238-residue stretch at 1052-1289 (IELRHISFKY…KDGVYASLVQ (238 aa)) folds into the ABC transporter 2 domain. 1087–1094 (GESGSGKS) lines the ATP pocket. N-linked (GlcNAc...) asparagine glycans are attached at residues Asn1141 and Asn1240.

This sequence belongs to the ABC transporter superfamily. ABCB family. Multidrug resistance exporter (TC 3.A.1.201) subfamily.

It localises to the membrane. In Arabidopsis thaliana (Mouse-ear cress), this protein is ABC transporter B family member 21 (ABCB21).